Reading from the N-terminus, the 357-residue chain is MKASIYDFTLKELSQLLKPSFRAKQLYLWLYAKYKTSFKDMQNNFSKDFIAYLEREFTLRTIEITHVRESVDGSKKYLFKSLRDNHTFEAVLLKMKDKKIDKETNAILEGEKYTVCVSCQIGCQVGCAFCFTQKGGFVRNLKASEIIQQALLIKEDNNLPIEKALNIVFMGMGEPLNNLDEVCKAIEIFNTGMQISPKRITISTSGVADKIPILAGKNLGVQLAISLHAVDDKTRSSLMPLNKKYNIECVLNEVKKWPLEQRKRVMFEYLLIKDLNDGLDCAKKLLKLLNGIKSKVNLILFNPHEGSKFERPSLESARMFADFLNSKGLLCTIRESKALDIEAACGQLREKKLSQQI.

The Proton acceptor role is filled by E89. Residues 109–340 form the Radical SAM core domain; sequence EGEKYTVCVS…CTIRESKALD (232 aa). C116 and C345 are joined by a disulfide. C123, C127, and C130 together coordinate [4Fe-4S] cluster. S-adenosyl-L-methionine-binding positions include 173 to 174, S203, 226 to 228, and N302; these read GE and SLH. The S-methylcysteine intermediate role is filled by C345.

This sequence belongs to the radical SAM superfamily. RlmN family. Requires [4Fe-4S] cluster as cofactor.

The protein resides in the cytoplasm. The catalysed reaction is adenosine(2503) in 23S rRNA + 2 reduced [2Fe-2S]-[ferredoxin] + 2 S-adenosyl-L-methionine = 2-methyladenosine(2503) in 23S rRNA + 5'-deoxyadenosine + L-methionine + 2 oxidized [2Fe-2S]-[ferredoxin] + S-adenosyl-L-homocysteine. It catalyses the reaction adenosine(37) in tRNA + 2 reduced [2Fe-2S]-[ferredoxin] + 2 S-adenosyl-L-methionine = 2-methyladenosine(37) in tRNA + 5'-deoxyadenosine + L-methionine + 2 oxidized [2Fe-2S]-[ferredoxin] + S-adenosyl-L-homocysteine. Functionally, specifically methylates position 2 of adenine 2503 in 23S rRNA and position 2 of adenine 37 in tRNAs. m2A2503 modification seems to play a crucial role in the proofreading step occurring at the peptidyl transferase center and thus would serve to optimize ribosomal fidelity. The protein is Dual-specificity RNA methyltransferase RlmN of Helicobacter pylori (strain P12).